Reading from the N-terminus, the 177-residue chain is Peptide deformylase (177 aa).

2 residues coordinate Fe cation: Cys99 and His141. Glu142 is an active-site residue. Residue His145 coordinates Fe cation.

It belongs to the polypeptide deformylase family. It depends on Fe(2+) as a cofactor.

The enzyme catalyses N-terminal N-formyl-L-methionyl-[peptide] + H2O = N-terminal L-methionyl-[peptide] + formate. Removes the formyl group from the N-terminal Met of newly synthesized proteins. Requires at least a dipeptide for an efficient rate of reaction. N-terminal L-methionine is a prerequisite for activity but the enzyme has broad specificity at other positions. The chain is Peptide deformylase from Rhizorhabdus wittichii (strain DSM 6014 / CCUG 31198 / JCM 15750 / NBRC 105917 / EY 4224 / RW1) (Sphingomonas wittichii).